Consider the following 247-residue polypeptide: Probable phosphatase swp_1620 (247 aa).

9 residues coordinate Zn(2+): His-8, His-10, His-16, His-41, Glu-74, His-102, His-132, Asp-193, and His-195.

The protein belongs to the PHP family. Zn(2+) serves as cofactor.

The chain is Probable phosphatase swp_1620 from Shewanella piezotolerans (strain WP3 / JCM 13877).